Here is a 470-residue protein sequence, read N- to C-terminus: UDP-N-acetylmuramate--L-alanine ligase (470 aa).

114–120 (GTHGKTT) contacts ATP.

Belongs to the MurCDEF family.

Its subcellular location is the cytoplasm. The enzyme catalyses UDP-N-acetyl-alpha-D-muramate + L-alanine + ATP = UDP-N-acetyl-alpha-D-muramoyl-L-alanine + ADP + phosphate + H(+). It functions in the pathway cell wall biogenesis; peptidoglycan biosynthesis. In terms of biological role, cell wall formation. This is UDP-N-acetylmuramate--L-alanine ligase from Xanthobacter autotrophicus (strain ATCC BAA-1158 / Py2).